Consider the following 297-residue polypeptide: B-lymphocyte antigen CD20 (297 aa).

The Cytoplasmic portion of the chain corresponds to 1–51 (MTTPRNSMSGTLPVDPMKSPTAMYPVQKIIPKRMPSVVGPTQNFFMRESKT). The residue at position 36 (Ser-36) is a Phosphoserine. Residues 52-72 (LGAVQIMNGLFHIALGSLLMI) traverse the membrane as a helical segment. At 73 to 75 (HTD) the chain is on the extracellular side. The chain crosses the membrane as a helical span at residues 76 to 96 (VCAPICITMWYPLWGGIMFII). At 97–122 (SGSLLAAADKNPRKSLVKGKMIMNSL) the chain is on the cytoplasmic side. Residues 123–143 (SLFAAISGIIFLIMDIFNITI) form a helical membrane-spanning segment. Topologically, residues 144–188 (SHFFKMENLNLIKAPMPYVDIHNCDPANPSEKNSLSIQYCGSIRS) are extracellular. A helical membrane pass occupies residues 189–209 (VFLGVFAVMLIFAFFQKLVTA). The Cytoplasmic segment spans residues 210-297 (GIVENEWKKL…SSPIENDSIP (88 aa)). Cys-220 is lipidated: S-palmitoyl cysteine. A Phosphoserine modification is found at Ser-225. Positions 274-297 (ELEINFAEPPQEQESSPIENDSIP) are disordered. The segment covering 281–290 (EPPQEQESSP) has biased composition (low complexity).

Belongs to the MS4A family. As to quaternary structure, forms homotetramers. Interacts with the heavy and light chains of cell surface IgM, the antigen-binding components of the BCR. In terms of processing, phosphorylated. Might be functionally regulated by protein kinase(s). As to expression, expressed in PBMCs and lymph node from healthy dogs, in B-cells of canine lymphoma, but not in T-cell lymphoma cells and non-T and non-B-cell lymphoma cells.

The protein localises to the cell membrane. In terms of biological role, B-lymphocyte-specific membrane protein that plays a role in the regulation of cellular calcium influx necessary for the development, differentiation, and activation of B-lymphocytes. Functions as a store-operated calcium (SOC) channel component promoting calcium influx after activation by the B-cell receptor/BCR. The chain is B-lymphocyte antigen CD20 (MS4A1) from Canis lupus familiaris (Dog).